A 140-amino-acid chain; its full sequence is Small ribosomal subunit protein uS19 (140 aa).

Belongs to the universal ribosomal protein uS19 family.

In terms of biological role, protein S19 forms a complex with S13 that binds strongly to the 16S ribosomal RNA. This chain is Small ribosomal subunit protein uS19, found in Methanocella arvoryzae (strain DSM 22066 / NBRC 105507 / MRE50).